A 450-amino-acid polypeptide reads, in one-letter code: Protein tweety homolog 1 (450 aa).

The Extracellular portion of the chain corresponds to 1–43; the sequence is MGAPPGYRPSAWVHLLHQLPRADFQLRPVPSVFAPQEQEYQQA. Residues 44–64 form a helical membrane-spanning segment; it reads LLLVAALAGLGLGLSLIFIAV. Residues 65-88 lie on the Cytoplasmic side of the membrane; that stretch reads YLIRFCCCRPPEPPGSKIPSPGGG. The chain crosses the membrane as a helical span at residues 89–109; the sequence is CVTWSCIVALLAGCTGIGIGF. The Extracellular portion of the chain corresponds to 110–214; the sequence is YGNSETSDGV…NVSFVEEYRW (105 aa). Residues N130 and N205 are each glycosylated (N-linked (GlcNAc...) asparagine). The helical transmembrane segment at 215-235 threads the bilayer; the sequence is LAYVLLLLLELLVCLFTLLGL. Residues 236 to 240 lie on the Cytoplasmic side of the membrane; sequence AKQSK. Residues 241-261 form a helical membrane-spanning segment; it reads WLVIVMTVMSLLVLVLSWGSM. Topologically, residues 262-390 are extracellular; that stretch reads GLEAATAVGL…LRGLCEDALE (129 aa). 2 disulfide bridges follow: C275–C385 and C303–C370. N284 and N355 each carry an N-linked (GlcNAc...) asparagine glycan. A helical transmembrane segment spans residues 391–411; that stretch reads GLLFLLLFSLLSAGALATALC. Residues 412 to 450 are Cytoplasmic-facing; the sequence is SLPRAWALFPPSDDYDDTDDDDPFNPQESKRFVQWQSSI. Residues 428 to 450 form a disordered region; the sequence is DTDDDDPFNPQESKRFVQWQSSI. S440 bears the Phosphoserine mark.

This sequence belongs to the tweety family. Homotetramer; disulfide-linked. Homodimer. Post-translationally, N-glycosylated. Contains high-mannose, hybrid and complex oligosaccharides. As to expression, expressed in brain, eye, ovary and testis, and at lower levels in muscle, placenta, liver and lung.

It localises to the cell membrane. The catalysed reaction is chloride(in) = chloride(out). It carries out the reaction L-glutamate(out) = L-glutamate(in). In terms of biological role, calcium-independent, swelling-dependent volume-regulated anion channel (VRAC-swell) which plays a pivotal role in the process of regulatory volume decrease (RVD) in the brain through the efflux of anions like chloride and organic osmolytes like glutamate. Its function is as follows. Ca(2+)-independent, swelling-activated chloride channel, possibly involved in regulation of cell volume. This chain is Protein tweety homolog 1 (TTYH1), found in Homo sapiens (Human).